A 41-amino-acid polypeptide reads, in one-letter code: Large ribosomal subunit protein bL36 (41 aa).

It belongs to the bacterial ribosomal protein bL36 family.

The protein is Large ribosomal subunit protein bL36 of Chelativorans sp. (strain BNC1).